Reading from the N-terminus, the 280-residue chain is Nucleotide-binding protein CV_3336 (280 aa).

8 to 15 lines the ATP pocket; it reads GLSGSGKS. 57–60 is a GTP binding site; that stretch reads DTRS.

Belongs to the RapZ-like family.

In terms of biological role, displays ATPase and GTPase activities. This is Nucleotide-binding protein CV_3336 from Chromobacterium violaceum (strain ATCC 12472 / DSM 30191 / JCM 1249 / CCUG 213 / NBRC 12614 / NCIMB 9131 / NCTC 9757 / MK).